Consider the following 278-residue polypeptide: Large ribosomal subunit protein uL2 (278 aa).

A disordered region spans residues 222–278 (GVVMNPIDHPHGGGEGRTSGGRHPVTPWGKPTKGKKTRSNKSTDKFILISRHKRKKK).

The protein belongs to the universal ribosomal protein uL2 family. Part of the 50S ribosomal subunit. Forms a bridge to the 30S subunit in the 70S ribosome.

Functionally, one of the primary rRNA binding proteins. Required for association of the 30S and 50S subunits to form the 70S ribosome, for tRNA binding and peptide bond formation. It has been suggested to have peptidyltransferase activity; this is somewhat controversial. Makes several contacts with the 16S rRNA in the 70S ribosome. The sequence is that of Large ribosomal subunit protein uL2 from Rhodopseudomonas palustris (strain BisB5).